The sequence spans 1106 residues: MKLKEVDRTAMQAWSPAQNHPIYLATGTSAQQLDATFSTNASLEIFELDLSDPSLDMKSCATFSSSHRYHKLIWGPYKMDSKGDVSGVLIAGGENGNIILYDPSKIIAGDKEVVIAQNDKHTGPVRALDVNIFQTNLVASGANESEIYIWDLNNFATPMTPGAKTQPPEDISCIAWNRQVQHILASASPSGRATVWDLRKNEPIIKVSDHSNRMHCSGLAWHPDVATQMVLASEDDRLPVIQMWDLRFASSPLRVLENHARGILAIAWSMADPELLLSCGKDAKILCSNPNTGEVLYELPTNTQWCFDIQWCPRNPAVLSAASFDGRISVYSIMGGSTDGLRQKQVDKLSSSFGNLDPFGTGQPLPPLQIPQQTAQHSIVLPLKKPPKWIRRPVGASFSFGGKLVTFENVRMPSHQGAEQQQQQHHVFISQVVTEKEFLSRSDQLQQAVQSQGFISYCQKKIDASQTEFEKNVWSFLKVNFEDDSRGKYLELLGYRKEDLGKKIALALNKVDGANVALKDSDQVAQSDGEESPAAEEQLLGEHIKEEKEESEFLPSSGGTFNISVSGDIDGLITQALLTGNFESAVDLCLHDNRMADAIILAIAGGQELLARTQKKYFAKSQSKITRLITAVVMKNWKEIVESCDLKNWREALAAVLTYAKPDEFSALCDLLGTRLENEGDSLLQTQACLCYICAGNVEKLVACWTKAQDGSHPLSLQDLIEKVVILRKAVQLTQAMDTSTVGVLLAAKMSQYANLLAAQGSIAAALAFLPDNTNQPNIMQLRDRLCRAQGEPVAGHESPKIPYEEQQLPKGRPGPVAGHHQMPRVQTQQYYPHGENPPPPGFIMHGNVNPNAAGQLPTSPGHMHTQVPPYPQPQRPQNGWNDPPALNRVPKKKKMPENFMPPVPITSPIMNPLGDPQSQMLQQQPSAPVPLSSQSSFPQPHLPGGQHFHGIQQPLGQTGMPPSFSKPNIEGAPGAPIGNTFQHVQSLPTKKITKKPIPDEHLILKTTFEDLIQRCLSSATDPQTKRKLDDASKRLEFLYDKLREQTLSPTITSGLHNIARSIETRNYSEGLTMHTHIVSTSNFSETSAFMPVLKVVLTQANKLGV.

WD repeat units follow at residues 4-47, 68-111, 120-160, 166-206, 209-254, 258-298, and 301-342; these read KEVD…EIFE, RYHK…AGDK, KHTG…TPMT, QPPE…PIIK, DHSN…SPLR, NHAR…VLYE, and TNTQ…DGLR. The interval 161–471 is interaction with SEC13; that stretch reads PGAKTQPPED…IDASQTEFEK (311 aa). A WD 8; interaction with SEC13 repeat occupies 397–430; the sequence is SFSFGGKLVTFENVRMPSHQGAEQQQQQHHVFIS. A phosphoserine mark is found at serine 527 and serine 532. A Glycyl lysine isopeptide (Lys-Gly) (interchain with G-Cter in ubiquitin) cross-link involves residue lysine 647. Serine 799 carries the post-translational modification Phosphoserine. The tract at residues 800–999 is interaction with PDCD6; that stretch reads PKIPYEEQQL…TKKITKKPIP (200 aa). The short motif at 842–848 is the ALG-2-binding site motif-2 (ABS-2) element; it reads GFIMHGN. The interval 859–980 is disordered; the sequence is TSPGHMHTQV…EGAPGAPIGN (122 aa). The segment covering 917–939 has biased composition (polar residues); sequence PQSQMLQQQPSAPVPLSSQSSFP. Threonine 1047 is modified (phosphothreonine). A Phosphoserine modification is found at serine 1049. Lysine 1103 participates in a covalent cross-link: Glycyl lysine isopeptide (Lys-Gly) (interchain with G-Cter in ubiquitin).

This sequence belongs to the WD repeat SEC31 family. COPII is composed of at least 5 proteins: the SEC23/24 complex, the SEC13/31 complex and SAR1. SEC13 and SEC31 make a 2:2 tetramer that forms the edge element of the COPII outer coat. The tetramer self-assembles in multiple copies to form the complete polyhedral cage. Interacts (via WD 8) with SEC13. Interacts with PDCD6; interaction takes place in response to cytosolic calcium increase and leads to bridge together the BCR(KLHL12) complex and SEC31A, leading to monoubiquitination. Interacts with KLHL12. In terms of processing, monoubiquitinated by the BCR(KLHL12) E3 ubiquitin ligase complex, leading to regulate the size of COPII coats.

The protein resides in the cytoplasm. Its subcellular location is the cytoplasmic vesicle. It localises to the COPII-coated vesicle membrane. The protein localises to the endoplasmic reticulum membrane. Its function is as follows. Component of the coat protein complex II (COPII) which promotes the formation of transport vesicles from the endoplasmic reticulum (ER). The coat has two main functions, the physical deformation of the endoplasmic reticulum membrane into vesicles and the selection of cargo molecules. This is Protein transport protein Sec31A (SEC31A) from Pongo abelii (Sumatran orangutan).